The chain runs to 602 residues: Potassium voltage-gated channel subfamily A member 5 (602 aa).

Residues 1-202 (MEISLVPLEN…FYQLGDEAME (202 aa)) form a tetramerization domain region. Over 1-238 (MEISLVPLEN…LIFEYPESSG (238 aa)) the chain is Cytoplasmic. Residues 58 to 107 (EDANQGGRPLPPMAQELPQPRRLSAEDEEGEGDPGLGTVEEDQAPQDAGS) form a disordered region. At serine 81 the chain carries Phosphoserine; by CK2 and PKA. Lysine 212 participates in a covalent cross-link: Glycyl lysine isopeptide (Lys-Gly) (interchain with G-Cter in SUMO). The chain crosses the membrane as a helical span at residues 239 to 260 (SARAIAIVSVLVILISIITFCL). Over 261–314 (ETLPEFRDERELLRHPPVPPQPPAPAPGINGSVSGALSSGPTVAPLLPRTLADP) the chain is Extracellular. Residues 315 to 336 (FFIVETTCVIWFTFELLVRFFA) traverse the membrane as a helical segment. Cysteine 337 carries S-palmitoyl cysteine lipidation. Residues 337–347 (CPSKAEFSRNI) are Cytoplasmic-facing. The helical transmembrane segment at 348–368 (MNIIDVVAIFPYFITLGTELA) threads the bilayer. The Extracellular portion of the chain corresponds to 369–384 (EQQPGGGGQNGQQAMS). The helical; Voltage-sensor transmembrane segment at 385 to 405 (LAILRVIRLVRVFRIFKLSRH) threads the bilayer. Residues 406–420 (SKGLQILGKTLQASM) lie on the Cytoplasmic side of the membrane. The interval 407-420 (KGLQILGKTLQASM) is S4-S5 linker. The helical transmembrane segment at 421–442 (RELGLLIFFLFIGVILFSSAVY) threads the bilayer. The Extracellular portion of the chain corresponds to 443 to 456 (FAEADNHGSHFSSI). Positions 457–468 (PDAFWWAVVTMT) form an intramembrane region, helical. Residues 469–474 (TVGYGD) carry the Selectivity filter motif. Residues 469-476 (TVGYGDMR) lie within the membrane without spanning it. The Extracellular portion of the chain corresponds to 477-483 (PITVGGK). Residues 484-512 (IVGSLCAIAGVLTIALPVPVIVSNFNYFY) form a helical membrane-spanning segment. Over 513 to 602 (HRETDHEEQA…CLDTSRETDL (90 aa)) the chain is Cytoplasmic. Basic and acidic residues predominate over residues 523 to 536 (ALKEEQGNQRRESG). Residues 523–543 (ALKEEQGNQRRESGLDTGGQR) are disordered. Lysine 525 is covalently cross-linked (Glycyl lysine isopeptide (Lys-Gly) (interchain with G-Cter in SUMO)). A phosphoserine; by PKA mark is found at serine 535, serine 546, and serine 569. The PDZ-binding signature appears at 600–602 (TDL).

Belongs to the potassium channel family. A (Shaker) (TC 1.A.1.2) subfamily. Kv1.5/KCNA5 sub-subfamily. As to quaternary structure, homotetramer and heterotetramer of potassium channel proteins. Interacts with DLG1, which enhances channel currents. Forms a ternary complex with DLG1 and CAV3. Interacts with KCNAB1. Interacts with UBE2I. Interacts with XIRP2; the interaction is required for normal action potential configuration in the heart. In terms of processing, glycosylated. Sumoylated on Lys-212, and Lys-525, preferentially with SUMO3. Sumoylation regulates the voltage sensitivity of the channel. As to expression, expressed equally in atrium, ventricle, aorta and skeletal muscle. Weaker expression in brain.

The protein localises to the cell membrane. It carries out the reaction K(+)(in) = K(+)(out). Voltage-gated potassium channel that mediates transmembrane potassium transport in excitable membranes. Forms tetrameric potassium-selective channels through which potassium ions pass in accordance with their electrochemical gradient. The channel alternates between opened and closed conformations in response to the voltage difference across the membrane. Can form functional homotetrameric channels and heterotetrameric channels that contain variable proportions of KCNA1, KCNA2, KCNA4, KCNA5, and possibly other family members as well; channel properties depend on the type of alpha subunits that are part of the channel. Channel properties are modulated by cytoplasmic beta subunits that regulate the subcellular location of the alpha subunits and promote rapid inactivation. Homotetrameric channels display rapid activation and slow inactivation. Required for normal electrical conduction including formation of the infranodal ventricular conduction system and normal action potential configuration, as a result of its interaction with XIRP2. May play a role in regulating the secretion of insulin in normal pancreatic islets. This chain is Potassium voltage-gated channel subfamily A member 5 (Kcna5), found in Rattus norvegicus (Rat).